The chain runs to 123 residues: MRIQSLLLLGALLAVGSQLPAVFGRKKGEKSGGCPPDDGPCLLSVPDQCVEDSQCPLTRKCCYRACFRQCVPRVSVKLGSCPEDQLRCLSPMNHLCHKDSDCSGKKRCCHSACGRDCRDPARG.

The signal sequence occupies residues 1–24 (MRIQSLLLLGALLAVGSQLPAVFG). 2 consecutive WAP domains span residues 27–73 (KGEK…CVPR) and 74–121 (VSVK…RDPA). Disulfide bonds link Cys34-Cys62, Cys41-Cys66, Cys49-Cys61, Cys55-Cys70, Cys81-Cys109, Cys88-Cys113, Cys96-Cys108, and Cys102-Cys117.

Its subcellular location is the secreted. In terms of biological role, putative acid-stable proteinase inhibitor. In Pongo abelii (Sumatran orangutan), this protein is WAP four-disulfide core domain protein 5 (WFDC5).